The following is a 145-amino-acid chain: Hemoglobin fetal subunit beta (145 aa).

Residues 1–145 form the Globin domain; sequence MLSAEEKAAV…VANALAHRYH (145 aa). Heme b-binding residues include histidine 62 and histidine 91.

It belongs to the globin family. Heterotetramer of two alpha chains and two beta chains. Red blood cells.

Involved in oxygen transport from the lung to the various peripheral tissues. The polypeptide is Hemoglobin fetal subunit beta (Bos taurus (Bovine)).